The following is a 246-amino-acid chain: 3-deoxy-manno-octulosonate cytidylyltransferase (246 aa).

Belongs to the KdsB family.

It is found in the cytoplasm. The catalysed reaction is 3-deoxy-alpha-D-manno-oct-2-ulosonate + CTP = CMP-3-deoxy-beta-D-manno-octulosonate + diphosphate. It participates in nucleotide-sugar biosynthesis; CMP-3-deoxy-D-manno-octulosonate biosynthesis; CMP-3-deoxy-D-manno-octulosonate from 3-deoxy-D-manno-octulosonate and CTP: step 1/1. Its pathway is bacterial outer membrane biogenesis; lipopolysaccharide biosynthesis. Its function is as follows. Activates KDO (a required 8-carbon sugar) for incorporation into bacterial lipopolysaccharide in Gram-negative bacteria. The protein is 3-deoxy-manno-octulosonate cytidylyltransferase of Rickettsia prowazekii (strain Madrid E).